The primary structure comprises 258 residues: Adenylate kinase (258 aa).

52–57 lines the ATP pocket; sequence GAGKGT. Residues 72 to 101 form an NMP region; the sequence is ATGDMLRSQVAKKTALGKEAKKIMDQGGLV. AMP contacts are provided by residues T73, R78, 99–101, 128–131, and Q135; these read GLV and GFPR. Positions 169-206 are LID; sequence GRLVHPASGRSYHKIFNPPKEEMKDDVTGEPLIQRSDD. ATP-binding positions include R170 and 179–180; that span reads SY. R203 and R214 together coordinate AMP. Q242 provides a ligand contact to ATP.

It belongs to the adenylate kinase family. AK2 subfamily. Monomer.

Its subcellular location is the cytoplasm. It localises to the cytosol. The protein resides in the mitochondrion intermembrane space. The enzyme catalyses AMP + ATP = 2 ADP. Functionally, catalyzes the reversible transfer of the terminal phosphate group between ATP and AMP. Plays an important role in cellular energy homeostasis and in adenine nucleotide metabolism. Adenylate kinase activity is critical for regulation of the phosphate utilization and the AMP de novo biosynthesis pathways. The polypeptide is Adenylate kinase (adk1) (Aspergillus niger (strain ATCC MYA-4892 / CBS 513.88 / FGSC A1513)).